A 246-amino-acid chain; its full sequence is Small ribosomal subunit protein uS2 (246 aa).

Belongs to the universal ribosomal protein uS2 family.

This chain is Small ribosomal subunit protein uS2, found in Burkholderia pseudomallei (strain 668).